A 391-amino-acid polypeptide reads, in one-letter code: Phosphoglycerate kinase (391 aa).

Substrate is bound by residues 21 to 23 (DLN), R36, 59 to 62 (HLGR), R114, and R147. ATP contacts are provided by residues K198, E315, and 344–347 (GGDT).

This sequence belongs to the phosphoglycerate kinase family. In terms of assembly, monomer.

Its subcellular location is the cytoplasm. The catalysed reaction is (2R)-3-phosphoglycerate + ATP = (2R)-3-phospho-glyceroyl phosphate + ADP. It functions in the pathway carbohydrate degradation; glycolysis; pyruvate from D-glyceraldehyde 3-phosphate: step 2/5. This is Phosphoglycerate kinase from Actinobacillus succinogenes (strain ATCC 55618 / DSM 22257 / CCUG 43843 / 130Z).